A 174-amino-acid chain; its full sequence is Putative serine protease 46 (174 aa).

The region spanning 43–174 is the Peptidase S1 domain; it reads VVKGKLVEVG…IGWGTTGKKG (132 aa). The cysteines at positions 68 and 84 are disulfide-linked. Catalysis depends on charge relay system residues histidine 83 and aspartate 128.

Belongs to the peptidase S1 family.

The polypeptide is Putative serine protease 46 (Homo sapiens (Human)).